Reading from the N-terminus, the 460-residue chain is Asparagine--tRNA ligase (460 aa).

It belongs to the class-II aminoacyl-tRNA synthetase family. In terms of assembly, homodimer.

It localises to the cytoplasm. The enzyme catalyses tRNA(Asn) + L-asparagine + ATP = L-asparaginyl-tRNA(Asn) + AMP + diphosphate + H(+). This chain is Asparagine--tRNA ligase, found in Picosynechococcus sp. (strain ATCC 27264 / PCC 7002 / PR-6) (Agmenellum quadruplicatum).